Consider the following 339-residue polypeptide: Glycerol-3-phosphate dehydrogenase [NAD(P)+] (339 aa).

Positions 15, 16, 36, and 110 each coordinate NADPH. Residues Lys110, Gly139, and Thr141 each coordinate sn-glycerol 3-phosphate. Position 143 (Ala143) interacts with NADPH. Lys195, Asp248, Ser258, Arg259, and Asn260 together coordinate sn-glycerol 3-phosphate. Lys195 functions as the Proton acceptor in the catalytic mechanism. NADPH is bound at residue Arg259. Residues Val283 and Glu285 each contribute to the NADPH site.

The protein belongs to the NAD-dependent glycerol-3-phosphate dehydrogenase family.

The protein localises to the cytoplasm. It catalyses the reaction sn-glycerol 3-phosphate + NAD(+) = dihydroxyacetone phosphate + NADH + H(+). The catalysed reaction is sn-glycerol 3-phosphate + NADP(+) = dihydroxyacetone phosphate + NADPH + H(+). It functions in the pathway membrane lipid metabolism; glycerophospholipid metabolism. In terms of biological role, catalyzes the reduction of the glycolytic intermediate dihydroxyacetone phosphate (DHAP) to sn-glycerol 3-phosphate (G3P), the key precursor for phospholipid synthesis. This is Glycerol-3-phosphate dehydrogenase [NAD(P)+] from Erwinia tasmaniensis (strain DSM 17950 / CFBP 7177 / CIP 109463 / NCPPB 4357 / Et1/99).